A 326-amino-acid polypeptide reads, in one-letter code: Probable cell division protein WhiA (326 aa).

The H-T-H motif DNA-binding region spans 275–308 (SLDELGHHADPPMTKDAVAGRIRRLLAMADKKAV).

It belongs to the WhiA family.

Involved in cell division and chromosome segregation. This is Probable cell division protein WhiA from Clavibacter sepedonicus (Clavibacter michiganensis subsp. sepedonicus).